The following is a 366-amino-acid chain: Carbamoyl phosphate synthase small chain (366 aa).

Positions 1-171 are CPSase; the sequence is MLEKRYLVLE…KTPYVSTGSD (171 aa). L-glutamine is bound by residues Ser-47, Gly-221, and Gly-223. A Glutamine amidotransferase type-1 domain is found at 173–360; the sequence is SVVLLDFGKK…ITMMKDFKEK (188 aa). The active-site Nucleophile is the Cys-248. L-glutamine is bound by residues Leu-249, Gln-252, Asn-290, Gly-292, and Tyr-293. Residues His-333 and Glu-335 contribute to the active site.

This sequence belongs to the CarA family. In terms of assembly, composed of two chains; the small (or glutamine) chain promotes the hydrolysis of glutamine to ammonia, which is used by the large (or ammonia) chain to synthesize carbamoyl phosphate. Tetramer of heterodimers (alpha,beta)4.

It catalyses the reaction hydrogencarbonate + L-glutamine + 2 ATP + H2O = carbamoyl phosphate + L-glutamate + 2 ADP + phosphate + 2 H(+). The catalysed reaction is L-glutamine + H2O = L-glutamate + NH4(+). It functions in the pathway amino-acid biosynthesis; L-arginine biosynthesis; carbamoyl phosphate from bicarbonate: step 1/1. It participates in pyrimidine metabolism; UMP biosynthesis via de novo pathway; (S)-dihydroorotate from bicarbonate: step 1/3. Functionally, small subunit of the glutamine-dependent carbamoyl phosphate synthetase (CPSase). CPSase catalyzes the formation of carbamoyl phosphate from the ammonia moiety of glutamine, carbonate, and phosphate donated by ATP, constituting the first step of 2 biosynthetic pathways, one leading to arginine and/or urea and the other to pyrimidine nucleotides. The small subunit (glutamine amidotransferase) binds and cleaves glutamine to supply the large subunit with the substrate ammonia. This Staphylococcus epidermidis (strain ATCC 35984 / DSM 28319 / BCRC 17069 / CCUG 31568 / BM 3577 / RP62A) protein is Carbamoyl phosphate synthase small chain.